Consider the following 382-residue polypeptide: Succinate--CoA ligase [ADP-forming] subunit beta 1 (382 aa).

An ATP-grasp domain is found at 9 to 235 (KQIFAKHGIR…ATEEDPLERE (227 aa)). ATP contacts are provided by residues Lys45, 52-54 (GRG), Glu91, Leu94, and Glu99. The Mg(2+) site is built by Asn191 and Asp204. A substrate-binding site is contributed by Asn255.

This sequence belongs to the succinate/malate CoA ligase beta subunit family. Heterotetramer of two alpha and two beta subunits. Mg(2+) serves as cofactor.

It carries out the reaction succinate + ATP + CoA = succinyl-CoA + ADP + phosphate. The catalysed reaction is GTP + succinate + CoA = succinyl-CoA + GDP + phosphate. The protein operates within carbohydrate metabolism; tricarboxylic acid cycle; succinate from succinyl-CoA (ligase route): step 1/1. Functionally, succinyl-CoA synthetase functions in the citric acid cycle (TCA), coupling the hydrolysis of succinyl-CoA to the synthesis of either ATP or GTP and thus represents the only step of substrate-level phosphorylation in the TCA. The beta subunit provides nucleotide specificity of the enzyme and binds the substrate succinate, while the binding sites for coenzyme A and phosphate are found in the alpha subunit. The sequence is that of Succinate--CoA ligase [ADP-forming] subunit beta 1 from Archaeoglobus fulgidus (strain ATCC 49558 / DSM 4304 / JCM 9628 / NBRC 100126 / VC-16).